Consider the following 1299-residue polypeptide: DNA-directed RNA polymerase subunit beta' (1299 aa).

4 residues coordinate Zn(2+): C60, C62, C75, and C78. Mg(2+) contacts are provided by D535, D537, and D539. The Zn(2+) site is built by C877, C954, C961, and C964.

Belongs to the RNA polymerase beta' chain family. In terms of assembly, the RNAP catalytic core consists of 2 alpha, 1 beta, 1 beta' and 1 omega subunit. When a sigma factor is associated with the core the holoenzyme is formed, which can initiate transcription. Mg(2+) is required as a cofactor. The cofactor is Zn(2+).

The enzyme catalyses RNA(n) + a ribonucleoside 5'-triphosphate = RNA(n+1) + diphosphate. Functionally, DNA-dependent RNA polymerase catalyzes the transcription of DNA into RNA using the four ribonucleoside triphosphates as substrates. The protein is DNA-directed RNA polymerase subunit beta' of Renibacterium salmoninarum (strain ATCC 33209 / DSM 20767 / JCM 11484 / NBRC 15589 / NCIMB 2235).